Here is a 233-residue protein sequence, read N- to C-terminus: Glucosamine-6-phosphate deaminase (233 aa).

Catalysis depends on aspartate 62, which acts as the Proton acceptor; for enolization step. The For ring-opening step role is filled by asparagine 128. Histidine 130 serves as the catalytic Proton acceptor; for ring-opening step. Glutamate 135 functions as the For ring-opening step in the catalytic mechanism.

The protein belongs to the glucosamine/galactosamine-6-phosphate isomerase family. NagB subfamily.

The catalysed reaction is alpha-D-glucosamine 6-phosphate + H2O = beta-D-fructose 6-phosphate + NH4(+). Its pathway is amino-sugar metabolism; N-acetylneuraminate degradation; D-fructose 6-phosphate from N-acetylneuraminate: step 5/5. Catalyzes the reversible isomerization-deamination of glucosamine 6-phosphate (GlcN6P) to form fructose 6-phosphate (Fru6P) and ammonium ion. This chain is Glucosamine-6-phosphate deaminase, found in Streptococcus agalactiae serotype Ia (strain ATCC 27591 / A909 / CDC SS700).